Reading from the N-terminus, the 128-residue chain is Small ribosomal subunit protein eS8 (128 aa).

The protein belongs to the eukaryotic ribosomal protein eS8 family. As to quaternary structure, part of the 30S ribosomal subunit.

This is Small ribosomal subunit protein eS8 from Methanococcus maripaludis (strain C7 / ATCC BAA-1331).